The primary structure comprises 298 residues: Multifunctional dioxygenase ausE (298 aa).

Substrate is bound by residues Arg72 and Gln127. Positions 130 and 132 each coordinate Fe cation. Thr167 contributes to the substrate binding site. His214 contacts Fe cation. Residue Arg226 participates in substrate binding.

This sequence belongs to the PhyH family. As to quaternary structure, homodimer. Fe cation is required as a cofactor.

The catalysed reaction is preaustinoid A1 + 2-oxoglutarate + O2 = preaustinoid A2 + succinate + CO2 + H2O. It carries out the reaction preaustinoid A2 + 2-oxoglutarate + O2 = preaustinoid A3 + succinate + CO2 + H2O. The enzyme catalyses berkeleyone A + 2-oxoglutarate + O2 = preaustinoid A + succinate + CO2 + H2O. It participates in secondary metabolite biosynthesis; terpenoid biosynthesis. In terms of biological role, multifunctional dioxygenase; part of the gene cluster that mediates the biosynthesis of calidodehydroaustin, a fungal meroterpenoid. The first step of the pathway is the synthesis of 3,5-dimethylorsellinic acid by the polyketide synthase ausA. 3,5-dimethylorsellinic acid is then prenylated by the polyprenyl transferase ausN. Further epoxidation by the FAD-dependent monooxygenase ausM and cyclization by the probable terpene cyclase ausL lead to the formation of protoaustinoid A. Protoaustinoid A is then oxidized to spiro-lactone preaustinoid A3 by the combined action of the FAD-binding monooxygenases ausB and ausC, and the dioxygenase ausE. Acid-catalyzed keto-rearrangement and ring contraction of the tetraketide portion of preaustinoid A3 by ausJ lead to the formation of preaustinoid A4. The aldo-keto reductase ausK, with the help of ausH, is involved in the next step by transforming preaustinoid A4 into isoaustinone which is in turn hydroxylated by the P450 monooxygenase ausI to form austinolide. The cytochrome P450 monooxygenase ausG modifies austinolide to austinol. Austinol is further acetylated to austin by the O-acetyltransferase ausP, which spontaneously changes to dehydroaustin. The cytochrome P450 monooxygenase ausR then converts dehydroaustin is into 7-dehydrodehydroaustin. The hydroxylation catalyzed by ausR permits the O-acetyltransferase ausQ to add an additional acetyl group to the molecule, leading to the formation of acetoxydehydroaustin. The short chain dehydrogenase ausT catalyzes the reduction of the double bond present between carbon atoms 1 and 2 to convert 7-dehydrodehydroaustin into 1,2-dihydro-7-hydroxydehydroaustin. AusQ catalyzes not only an acetylation reaction but also the addition of the PKS ausV diketide product to 1,2-dihydro-7-hydroxydehydroaustin, forming precalidodehydroaustin. Finally, the iron/alpha-ketoglutarate-dependent dioxygenase converts precalidodehydroaustin into calidodehydroaustin. This Aspergillus calidoustus protein is Multifunctional dioxygenase ausE.